The primary structure comprises 400 residues: Elongation factor Tu (400 aa).

In terms of domain architecture, tr-type G spans 10–208 (KPHVNVGTIG…AMDNYIPDPQ (199 aa)). A G1 region spans residues 19-26 (GHIDHGKS). 19–26 (GHIDHGKS) contacts GTP. Ser-26 contacts Mg(2+). Residues 60–64 (GITIN) are G2. The G3 stretch occupies residues 81–84 (DCPG). Residues 81 to 85 (DCPGH) and 136 to 139 (NKTD) each bind GTP. Positions 136 to 139 (NKTD) are G4. The tract at residues 174 to 176 (SAL) is G5.

It belongs to the TRAFAC class translation factor GTPase superfamily. Classic translation factor GTPase family. EF-Tu/EF-1A subfamily. In terms of assembly, monomer.

Its subcellular location is the cytoplasm. It carries out the reaction GTP + H2O = GDP + phosphate + H(+). Its function is as follows. GTP hydrolase that promotes the GTP-dependent binding of aminoacyl-tRNA to the A-site of ribosomes during protein biosynthesis. In Thermotoga neapolitana (strain ATCC 49049 / DSM 4359 / NBRC 107923 / NS-E), this protein is Elongation factor Tu.